We begin with the raw amino-acid sequence, 336 residues long: NmrA-like family domain-containing oxidoreductase malD (336 aa).

NADP(+) contacts are provided by residues 12–17 (GGTGNQ), 40–44 (RDPTS), 61–62 (DG), 82–84 (TNS), lysine 140, and 163–166 (FMEA).

Belongs to the NmrA-type oxidoreductase family.

In terms of biological role, nmrA-like family domain-containing oxidoreductase; part of the gene cluster that mediates the biosynthesis of malbrancheamide, a dichlorinated fungal indole alkaloid that belongs to a family of natural products containing a characteristic bicyclo[2.2.2]diazaoctane core. The first step of malbrancheamide biosynthesis involves coupling of L-proline and L-tryptophan by malG, a bimodular NRPS, to produce L-Pro-L-Trp aldehyde through reductive offloading. This compound undergoes spontaneous cyclization and dehydration to give a dienamine which is reverse prenylated at C-2 by malE. The other prenyltransferase present in the cluster, malB, displays modest activity, suggesting that may be a redundant gene in the pathway. Subsequently, a [4+2] Diels-Alder cyclo-addition catalyzed by the bifunctional enzyme malC forms the characteristic bicyclo[2.2.2]diazaoctane ring of premalbrancheamid. Finally, the flavin-dependent halogenase malA catalyzes the iterative dichlorination of the indole ring of premalbrancheamide to yield C-9 monochlorinated malbrancheamide B, C-8 monochlorinated isomalbrancheamide B, and dichlorinated malbrancheamide. MalA is also able to brominate premalbrancheamide at C-9 to yield malbrancheamide C, and, to a lesser extend, at C-8 to yield isomalbrancheamide C. Finally, malA can brominate C-9 monochlorinated malbrancheamide B at C-8 to yield malbrancheamide D, or C-8 monochlorinated isomalbrancheamide B at C-9 to produce isomalbrancheamide D. In Malbranchea aurantiaca, this protein is NmrA-like family domain-containing oxidoreductase malD.